Here is a 139-residue protein sequence, read N- to C-terminus: Small ribosomal subunit protein uS12m (139 aa).

A mitochondrion-targeting transit peptide spans 1-29; sequence MSWPGLLYGLTTSLSRGLALAPQLWAARS.

Belongs to the universal ribosomal protein uS12 family. As to quaternary structure, component of the mitochondrial ribosome small subunit (28S) which comprises a 12S rRNA and about 30 distinct proteins.

The protein resides in the mitochondrion. The polypeptide is Small ribosomal subunit protein uS12m (Mrps12) (Mus musculus (Mouse)).